Reading from the N-terminus, the 490-residue chain is Beta-1,3-glucan-binding protein 1 (490 aa).

A signal peptide spans 1–19 (MYKQTVVIFLLCFFICVSC). The CBM39 domain maps to 20-119 (YEVPPAKLEA…GEWTVTGYVD (100 aa)). In terms of domain architecture, GH16 spans 152-490 (PPTSQNTYPC…QVDYVRVYAL (339 aa)). N-linked (GlcNAc...) asparagine glycosylation is present at Asn372.

The protein belongs to the insect beta-1,3-glucan binding protein family. As to quaternary structure, monomer. In terms of tissue distribution, hemolymph.

The protein resides in the secreted. In terms of biological role, plays a role in the recognition of invading microorganisms activating the phenoloxidase cascade. Binds specifically to beta-1,3-glucan. Binds the Aspergillus niger cell wall component alpha-1,3-glucan, a fungal pathogen-associated molecular pattern (PAMP) that activates the host immune response. The protein is Beta-1,3-glucan-binding protein 1 of Galleria mellonella (Greater wax moth).